Reading from the N-terminus, the 405-residue chain is uncharacterized protein (405 aa).

Positions 1–34 (MNKFLKYFLILLALVLIVVPIVFATLLFKTSQDA) are cleaved as a signal peptide. Residues 348-359 (EQNDTTDKDKTS) show a composition bias toward basic and acidic residues. A disordered region spans residues 348-405 (EQNDTTDKDKTSNENSDSTNNSDSSNQQQPATDQNSNQNQGGTQQAPQASNNQNGVVN). Composition is skewed to low complexity over residues 360 to 373 (NENS…DSSN) and 381 to 392 (QNSNQNQGGTQQ). The segment covering 393 to 405 (APQASNNQNGVVN) has biased composition (polar residues).

This sequence belongs to the LytR/CpsA/Psr (LCP) family.

This is an uncharacterized protein from Staphylococcus aureus (strain NCTC 8325 / PS 47).